The chain runs to 357 residues: Glutamine synthetase root isozyme A (357 aa).

In terms of domain architecture, GS beta-grasp spans 19 to 99; it reads IIAEYIWVGG…VICDVYTPAG (81 aa). In terms of domain architecture, GS catalytic spans 106–357; it reads KRYNAAKIFS…AETTILWKKP (252 aa).

Belongs to the glutamine synthetase family. As to quaternary structure, homooctamer.

It is found in the cytoplasm. The enzyme catalyses L-glutamate + NH4(+) + ATP = L-glutamine + ADP + phosphate + H(+). The chain is Glutamine synthetase root isozyme A (GS3A) from Pisum sativum (Garden pea).